Reading from the N-terminus, the 311-residue chain is tRNA dimethylallyltransferase (311 aa).

12–19 (GPTASGKT) is an ATP binding site. Residue 14-19 (TASGKT) participates in substrate binding. Interaction with substrate tRNA regions lie at residues 37–40 (DSAL), 161–165 (QRINR), and 241–246 (RCVGYR).

This sequence belongs to the IPP transferase family. As to quaternary structure, monomer. The cofactor is Mg(2+).

The catalysed reaction is adenosine(37) in tRNA + dimethylallyl diphosphate = N(6)-dimethylallyladenosine(37) in tRNA + diphosphate. In terms of biological role, catalyzes the transfer of a dimethylallyl group onto the adenine at position 37 in tRNAs that read codons beginning with uridine, leading to the formation of N6-(dimethylallyl)adenosine (i(6)A). This chain is tRNA dimethylallyltransferase, found in Histophilus somni (strain 129Pt) (Haemophilus somnus).